The following is a 115-amino-acid chain: MKFFYLIFSAIFFLADPALVKCSEDCENIFHDNAYLLKLDCEAGRVDPVEYDDISDEEIYEITVDVGVSSEDQEKVAKIIRECIAQVSTQDCTKFSEIYDCYMKKKICNYYPENM.

The signal sequence occupies residues M1–C22. Intrachain disulfides connect C26/C108, C41/C92, and C83/C101.

As to quaternary structure, may form multimers. Salivary gland (at protein level).

Its subcellular location is the secreted. Functionally, salivary protein that inhibits the classical pathway of complement system activation in the host while having no inhibitory effect on the alternative or lectin pathways. Prevent cleavage of host C4 and consequently impairs the activation of factors downstream of C4b in the complement cascade. The protein is Salivary anti-complement protein of Lutzomyia longipalpis (Sand fly).